We begin with the raw amino-acid sequence, 481 residues long: UDP-glycosyltransferase 72E3 (481 aa).

Histidine 18 acts as the Proton acceptor in catalysis. Histidine 18 is a binding site for an anthocyanidin. The Charge relay role is filled by aspartate 111. Residues alanine 346, glutamine 348, histidine 363, tryptophan 366, serine 368, and glutamate 371 each contribute to the UDP-alpha-D-glucose site. An anthocyanidin is bound at residue alanine 386. Positions 387 and 388 each coordinate UDP-alpha-D-glucose.

The protein belongs to the UDP-glycosyltransferase family. In terms of tissue distribution, expressed in seedlings and roots, and at lower levels in flowers and siliques.

The catalysed reaction is (E)-4-coumarate + UDP-alpha-D-glucose = 4-O-(beta-D-glucosyl)-trans-4-coumarate + UDP + H(+). The enzyme catalyses (E)-sinapyl alcohol + UDP-alpha-D-glucose = 4-O-(beta-D-glucosyl)-trans-4-sinapoyl alcohol + UDP + H(+). It carries out the reaction (E)-coniferol + UDP-alpha-D-glucose = 4-O-(beta-D-glucosyl)-(E)-coniferol + UDP + H(+). It catalyses the reaction (E)-sinapate + UDP-alpha-D-glucose = 4-O-(beta-D-glucosyl)-trans-sinapate + UDP + H(+). The catalysed reaction is (E)-coniferaldehyde + UDP-alpha-D-glucose = 4-O-(beta-D-glucosyl)-4-(E)-coniferyl aldehyde + UDP + H(+). The enzyme catalyses (E)-sinapaldehyde + UDP-alpha-D-glucose = 4-O-(beta-D-glucosyl)-4-trans-sinapoyl aldehyde + UDP + H(+). Functionally, involved in the O-glucosylation of monolignols (alcohol monomers of lignin). Glucosylates coniferyl alcohol to form coniferyl alcohol 4-O-glucoside. Glucosylates sinapyl alcohol to form sinapyl alcohol 4-O-glucoside. Possesses low activity with sinapate as substrate. The chain is UDP-glycosyltransferase 72E3 from Arabidopsis thaliana (Mouse-ear cress).